The sequence spans 267 residues: Cyclin-C (267 aa).

One can recognise a Cyclin N-terminal domain in the interval 48 to 151; it reads IQVLGEQLKL…LLENLDCCLI (104 aa).

The protein belongs to the cyclin family. Cyclin C subfamily. As to quaternary structure, component of the Cdk8 module of the Mediator complex.

The protein localises to the nucleus. Functionally, component of the Mediator complex, a coactivator involved in regulated gene transcription of nearly all RNA polymerase II-dependent genes. Mediator functions as a bridge to convey information from gene-specific regulatory proteins to the basal RNA polymerase II transcription machinery. Mediator is recruited to promoters by direct interactions with regulatory proteins and serves as a scaffold for the assembly of a functional preinitiation complex with RNA polymerase II and the general transcription factors. Binds to and activates cyclin-dependent kinase Cdk8 that phosphorylates the CTD (C-terminal domain) of the large subunit of RNA polymerase II (RNAp II), which may inhibit the formation of a transcription initiation complex. This is Cyclin-C (CycC) from Drosophila pseudoobscura pseudoobscura (Fruit fly).